The primary structure comprises 476 residues: tRNA(Ile)-lysidine synthase (476 aa).

30–35 (SGGPDS) contacts ATP.

Belongs to the tRNA(Ile)-lysidine synthase family.

Its subcellular location is the cytoplasm. It carries out the reaction cytidine(34) in tRNA(Ile2) + L-lysine + ATP = lysidine(34) in tRNA(Ile2) + AMP + diphosphate + H(+). Its function is as follows. Ligates lysine onto the cytidine present at position 34 of the AUA codon-specific tRNA(Ile) that contains the anticodon CAU, in an ATP-dependent manner. Cytidine is converted to lysidine, thus changing the amino acid specificity of the tRNA from methionine to isoleucine. In Bacillus thuringiensis subsp. konkukian (strain 97-27), this protein is tRNA(Ile)-lysidine synthase.